A 95-amino-acid polypeptide reads, in one-letter code: MRCTTLIMVSFVVSCLLLSLVEESEAGAPPVECWSEILFSGKCGFHGKKKCYKEMESKLKQRVLKCRCEDVKKDSNTSKDEHYCGCQRENPYECN.

The signal sequence occupies residues 1 to 26; sequence MRCTTLIMVSFVVSCLLLSLVEESEA. Intrachain disulfides connect C33/C94, C43/C68, C51/C84, and C66/C86.

The protein belongs to the DEFL family. Flower buds.

It localises to the secreted. This Arabidopsis thaliana (Mouse-ear cress) protein is Defensin-like protein 232 (SCRL23).